The following is a 186-amino-acid chain: Protein GrpE (186 aa).

Residues Met-1–Glu-17 are compositionally biased toward basic and acidic residues. The disordered stretch occupies residues Met-1–Ala-32.

This sequence belongs to the GrpE family. As to quaternary structure, homodimer.

It is found in the cytoplasm. In terms of biological role, participates actively in the response to hyperosmotic and heat shock by preventing the aggregation of stress-denatured proteins, in association with DnaK and GrpE. It is the nucleotide exchange factor for DnaK and may function as a thermosensor. Unfolded proteins bind initially to DnaJ; upon interaction with the DnaJ-bound protein, DnaK hydrolyzes its bound ATP, resulting in the formation of a stable complex. GrpE releases ADP from DnaK; ATP binding to DnaK triggers the release of the substrate protein, thus completing the reaction cycle. Several rounds of ATP-dependent interactions between DnaJ, DnaK and GrpE are required for fully efficient folding. The protein is Protein GrpE of Helicobacter acinonychis (strain Sheeba).